Consider the following 442-residue polypeptide: tRNA-2-methylthio-N(6)-dimethylallyladenosine synthase (442 aa).

One can recognise an MTTase N-terminal domain in the interval 5-122; that stretch reads KKVFIKTLGC…LPEMIKQKQK (118 aa). Positions 14, 51, 85, 159, 163, and 166 each coordinate [4Fe-4S] cluster. The region spanning 145–378 is the Radical SAM core domain; the sequence is KAEGAKAYVS…DLLNSNAQII (234 aa). The TRAM domain occupies 380–442; that stretch reads RQMVGTNQRI…LPNSLRGELI (63 aa).

This sequence belongs to the methylthiotransferase family. MiaB subfamily. Monomer. The cofactor is [4Fe-4S] cluster.

It is found in the cytoplasm. It carries out the reaction N(6)-dimethylallyladenosine(37) in tRNA + (sulfur carrier)-SH + AH2 + 2 S-adenosyl-L-methionine = 2-methylsulfanyl-N(6)-dimethylallyladenosine(37) in tRNA + (sulfur carrier)-H + 5'-deoxyadenosine + L-methionine + A + S-adenosyl-L-homocysteine + 2 H(+). In terms of biological role, catalyzes the methylthiolation of N6-(dimethylallyl)adenosine (i(6)A), leading to the formation of 2-methylthio-N6-(dimethylallyl)adenosine (ms(2)i(6)A) at position 37 in tRNAs that read codons beginning with uridine. This is tRNA-2-methylthio-N(6)-dimethylallyladenosine synthase from Francisella tularensis subsp. holarctica (strain FTNF002-00 / FTA).